Here is a 301-residue protein sequence, read N- to C-terminus: Asialoglycoprotein receptor 2 (301 aa).

The interval 1–43 (MEKDCQDIQQLDSEENDHQLSGDDEHGSHVQDPRIENPHWKGQ) is disordered. At 1-58 (MEKDCQDIQQLDSEENDHQLSGDDEHGSHVQDPRIENPHWKGQPLSRPFPQRLCSTFR) the chain is on the cytoplasmic side. Position 13 is a phosphoserine (Ser-13). Residues 16–39 (NDHQLSGDDEHGSHVQDPRIENPH) are compositionally biased toward basic and acidic residues. Cys-54 is lipidated: S-palmitoyl cysteine. A helical; Signal-anchor for type II membrane protein transmembrane segment spans residues 59–79 (LSLLALAFNILLLVVICVVSS). The Extracellular segment spans residues 80–301 (QSIQLQEEFR…VCEKRRNITH (222 aa)). Residues Asn-97 and Asn-165 are each glycosylated (N-linked (GlcNAc...) asparagine). In terms of domain architecture, C-type lectin spans 169 to 295 (CCPVNWVEFG…QQVNRWVCEK (127 aa)). Cystine bridges form between Cys-170-Cys-181, Cys-198-Cys-293, and Cys-271-Cys-285. N-linked (GlcNAc...) asparagine glycosylation occurs at Asn-298.

Interacts with LASS2. As to expression, expressed exclusively in hepatic parenchymal cells.

It is found in the membrane. Its function is as follows. Mediates the endocytosis of plasma glycoproteins to which the terminal sialic acid residue on their complex carbohydrate moieties has been removed. The receptor recognizes terminal galactose and N-acetylgalactosamine units. After ligand binding to the receptor, the resulting complex is internalized and transported to a sorting organelle, where receptor and ligand are disassociated. The receptor then returns to the cell membrane surface. In Mus musculus (Mouse), this protein is Asialoglycoprotein receptor 2 (Asgr2).